The primary structure comprises 61 residues: Small ribosomal subunit protein uS14B (61 aa).

Zn(2+) is bound by residues cysteine 24, cysteine 27, cysteine 40, and cysteine 43.

Belongs to the universal ribosomal protein uS14 family. Zinc-binding uS14 subfamily. As to quaternary structure, part of the 30S ribosomal subunit. Contacts proteins S3 and S10. Zn(2+) is required as a cofactor.

Its function is as follows. Binds 16S rRNA, required for the assembly of 30S particles and may also be responsible for determining the conformation of the 16S rRNA at the A site. The polypeptide is Small ribosomal subunit protein uS14B (Oceanobacillus iheyensis (strain DSM 14371 / CIP 107618 / JCM 11309 / KCTC 3954 / HTE831)).